Consider the following 528-residue polypeptide: Light-independent protochlorophyllide reductase subunit B (528 aa).

Aspartate 36 contributes to the [4Fe-4S] cluster binding site. Residue aspartate 274 is the Proton donor of the active site. Substrate is bound at residue 409–410; that stretch reads GL. The tract at residues 429 to 471 is disordered; that stretch reads GPSHHGGHAPKPMHDAPAASAAAGAEASMAEETAAPSQDAPAA. Residues 444–465 show a composition bias toward low complexity; the sequence is APAASAAAGAEASMAEETAAPS.

It belongs to the ChlB/BchB/BchZ family. In terms of assembly, protochlorophyllide reductase is composed of three subunits; BchL, BchN and BchB. Forms a heterotetramer of two BchB and two BchN subunits. It depends on [4Fe-4S] cluster as a cofactor.

It carries out the reaction chlorophyllide a + oxidized 2[4Fe-4S]-[ferredoxin] + 2 ADP + 2 phosphate = protochlorophyllide a + reduced 2[4Fe-4S]-[ferredoxin] + 2 ATP + 2 H2O. It participates in porphyrin-containing compound metabolism; bacteriochlorophyll biosynthesis (light-independent). Component of the dark-operative protochlorophyllide reductase (DPOR) that uses Mg-ATP and reduced ferredoxin to reduce ring D of protochlorophyllide (Pchlide) to form chlorophyllide a (Chlide). This reaction is light-independent. The NB-protein (BchN-BchB) is the catalytic component of the complex. This is Light-independent protochlorophyllide reductase subunit B from Dinoroseobacter shibae (strain DSM 16493 / NCIMB 14021 / DFL 12).